The primary structure comprises 200 residues: Urease accessory protein UreG (200 aa).

GTP is bound at residue G8–T15.

Belongs to the SIMIBI class G3E GTPase family. UreG subfamily. In terms of assembly, homodimer. UreH, UreF and UreG form a complex that acts as a GTP-hydrolysis-dependent molecular chaperone, activating the urease apoprotein by helping to assemble the nickel containing metallocenter of UreC. The UreE protein probably delivers the nickel.

It localises to the cytoplasm. In terms of biological role, facilitates the functional incorporation of the urease nickel metallocenter. This process requires GTP hydrolysis, probably effectuated by UreG. In Helicobacter hepaticus (strain ATCC 51449 / 3B1), this protein is Urease accessory protein UreG.